A 438-amino-acid polypeptide reads, in one-letter code: ATP-dependent RNA helicase RhlB (438 aa).

The Q motif signature appears at 9-37 (QRFADLPLHPEVKQALAENGFEFCTPIQA). A Helicase ATP-binding domain is found at 40–219 (LPVLLQSKDI…YDHMNEPVKV (180 aa)). Residue 53-60 (AQTGTGKT) participates in ATP binding. Residues 165–168 (DEAD) carry the DEAD box motif. The Helicase C-terminal domain occupies 243–390 (KMRLLLTLIE…VSNYDSEALL (148 aa)). Positions 395–438 (TPAKIHRKHPSGTRNLRDRSGTSRPGAQRSGARPPRHDRTRRHS) are disordered. Basic residues predominate over residues 428–438 (PPRHDRTRRHS).

Belongs to the DEAD box helicase family. RhlB subfamily. Component of the RNA degradosome, which is a multiprotein complex involved in RNA processing and mRNA degradation.

The protein localises to the cytoplasm. The enzyme catalyses ATP + H2O = ADP + phosphate + H(+). In terms of biological role, DEAD-box RNA helicase involved in RNA degradation. Has RNA-dependent ATPase activity and unwinds double-stranded RNA. The chain is ATP-dependent RNA helicase RhlB from Shewanella baltica (strain OS223).